The primary structure comprises 212 residues: Phosphoribosylglycinamide formyltransferase (212 aa).

Residue 12-14 coordinates N(1)-(5-phospho-beta-D-ribosyl)glycinamide; sequence GTN. Residues 90–93 and asparagine 107 contribute to the (6R)-10-formyltetrahydrofolate site; that span reads MKIL. The active-site Proton donor is the histidine 109.

The protein belongs to the GART family.

The enzyme catalyses N(1)-(5-phospho-beta-D-ribosyl)glycinamide + (6R)-10-formyltetrahydrofolate = N(2)-formyl-N(1)-(5-phospho-beta-D-ribosyl)glycinamide + (6S)-5,6,7,8-tetrahydrofolate + H(+). It participates in purine metabolism; IMP biosynthesis via de novo pathway; N(2)-formyl-N(1)-(5-phospho-D-ribosyl)glycinamide from N(1)-(5-phospho-D-ribosyl)glycinamide (10-formyl THF route): step 1/1. Its function is as follows. Catalyzes the transfer of a formyl group from 10-formyltetrahydrofolate to 5-phospho-ribosyl-glycinamide (GAR), producing 5-phospho-ribosyl-N-formylglycinamide (FGAR) and tetrahydrofolate. This is Phosphoribosylglycinamide formyltransferase from Haemophilus influenzae (strain ATCC 51907 / DSM 11121 / KW20 / Rd).